The chain runs to 313 residues: Ribosomal RNA small subunit methyltransferase H (313 aa).

S-adenosyl-L-methionine is bound by residues Gly35–His37, Asp55, Phe81, Asp103, and Gln110.

This sequence belongs to the methyltransferase superfamily. RsmH family.

It localises to the cytoplasm. It catalyses the reaction cytidine(1402) in 16S rRNA + S-adenosyl-L-methionine = N(4)-methylcytidine(1402) in 16S rRNA + S-adenosyl-L-homocysteine + H(+). Functionally, specifically methylates the N4 position of cytidine in position 1402 (C1402) of 16S rRNA. This Pseudomonas paraeruginosa (strain DSM 24068 / PA7) (Pseudomonas aeruginosa (strain PA7)) protein is Ribosomal RNA small subunit methyltransferase H.